A 356-amino-acid chain; its full sequence is MSSLADLINLDLSDSTDQIIAEYIWIGGSGLDMRSKARTLPGPVTDPSQLPKWNYDGSSTGQAPGDDSEVIIYPQAIFKDPFRRGNNILVMCDAYTPAGEPIPTNKRHAAAKIFEDPSVVAEETWYGIEQEYTLLQKDIKWPVGWPVGGFPGPQGPYYCGVGADKAFGRDIVDSHYKACLYAGINVSGTNGEVMPGQWEFQVGPTVGIAAADQVWVARYILERITELAGVVLSLDPKPIPGDWNGAGAHTNYSTKSMREDGGYEVIKKAIEKLGLRHKEHIAAYGEGNERRLTGKHETADINTFLWGVANRGASIRVGRDTEQAGKGYFEDRRPASNMDPYTVTSMIAESTILWKP.

The residue at position 2 (S2) is an N-acetylserine. Phosphoserine occurs at positions 2 and 48. The region spanning 19–99 (IIAEYIWIGG…VMCDAYTPAG (81 aa)) is the GS beta-grasp domain. The interval 37-66 (ARTLPGPVTDPSQLPKWNYDGSSTGQAPGD) is disordered. Residues 106–356 (KRHAAAKIFE…IAESTILWKP (251 aa)) form the GS catalytic domain.

It belongs to the glutamine synthetase family. Homooctamer. Interacts with GRF3. Expressed in the pericycle in the region of lateral root emergence.

It localises to the cytoplasm. It catalyses the reaction L-glutamate + NH4(+) + ATP = L-glutamine + ADP + phosphate + H(+). In terms of biological role, high-affinity glutamine synthetase. May contribute to the homeostatic control of glutamine synthesis in roots. This chain is Glutamine synthetase cytosolic isozyme 1-4, found in Arabidopsis thaliana (Mouse-ear cress).